Here is a 412-residue protein sequence, read N- to C-terminus: Poly-beta-1,6-N-acetyl-D-glucosamine synthase (412 aa).

A run of 4 helical transmembrane segments spans residues 7–28 (LLFYPIFMSIYWIVGSIYYFFI), 298–320 (IASITWVYIVICYLSFLVITANI), 332–354 (IFFFSSFTMTFINIIQFTVALFI), and 364–386 (VGLIFLSWYPTLYWVINAAVVIM).

The protein belongs to the glycosyltransferase 2 family.

It is found in the cell membrane. In terms of biological role, N-acetylglucosaminyltransferase that catalyzes the polymerization of single monomer units of UDP-N-acetylglucosamine to produce the linear homomer poly-beta-1,6-N-acetyl-D-glucosamine (PNAG, also referred to as PIA), a biofilm adhesin polysaccharide. Requires IcaD for full activity. The chain is Poly-beta-1,6-N-acetyl-D-glucosamine synthase (icaA) from Staphylococcus epidermidis.